Reading from the N-terminus, the 412-residue chain is Putative competence-damage inducible protein (412 aa).

This sequence belongs to the CinA family.

This is Putative competence-damage inducible protein from Bacillus thuringiensis (strain Al Hakam).